The chain runs to 109 residues: UPF0060 membrane protein PSPA7_1846 (109 aa).

4 consecutive transmembrane segments (helical) span residues 5-25, 27-47, 59-79, and 84-104; these read LWFV…YLWL, LGKS…FALL, AYAA…AFVE, and LWSD…VLFG.

Belongs to the UPF0060 family.

It is found in the cell inner membrane. In Pseudomonas paraeruginosa (strain DSM 24068 / PA7) (Pseudomonas aeruginosa (strain PA7)), this protein is UPF0060 membrane protein PSPA7_1846.